Reading from the N-terminus, the 500-residue chain is Zinc finger protein 689 (500 aa).

Positions 1-24 (MAPPSAPLLEQAPGEVGPTRRRGR) are disordered. The 72-residue stretch at 29 to 100 (LKFADVAVYF…AALDPQEYRR (72 aa)) folds into the KRAB domain. The interval 110 to 144 (TRQKNEEKEVFPPKDVPRKGKRGRKPSKPRLIARQ) is disordered. Over residues 112–127 (QKNEEKEVFPPKDVPR) the composition is skewed to basic and acidic residues. Residues 128 to 137 (KGKRGRKPSK) show a composition bias toward basic residues. The segment at 149–171 (PICPDCGCTFPDLPALESHKCAQ) adopts a C2H2-type 1; degenerate zinc-finger fold. 10 C2H2-type zinc fingers span residues 177–199 (YPCPDCGRRFSYPSLLVSHRRAH), 205–227 (YVCDQCGKRFSQRKNLSQHQVIH), 233–255 (YHCPDCGRCFRRSRSLANHRTTH), 261–283 (HQCPSCGRRFAYPSLLAIHQRTH), 289–311 (YTCLECSRRFRQRTALVIHQRIH), 317–339 (YPCPDCERRFSSSSRLVSHRRVH), 345–367 (YACEHCEARFSQRSTLLQHQLLH), 373–395 (YPCPDCGRAFRRSGSLAIHRSTH), 401–423 (HACDDCGRRFAYPSLLASHRRVH), and 429–451 (YACDLCSKRFAQWSHLAQHQLLH). Lysine 455 is covalently cross-linked (Glycyl lysine isopeptide (Lys-Gly) (interchain with G-Cter in SUMO2)). The C2H2-type 12 zinc-finger motif lies at 457–482 (FPCLECGRCFRQRWSLAVHKCCPNTH).

Belongs to the krueppel C2H2-type zinc-finger protein family.

Its subcellular location is the nucleus. May be involved in transcriptional regulation. In Rattus norvegicus (Rat), this protein is Zinc finger protein 689 (Znf689).